The chain runs to 381 residues: Alkanesulfonate monooxygenase (381 aa).

The protein belongs to the SsuD family. As to quaternary structure, homotetramer.

The catalysed reaction is an alkanesulfonate + FMNH2 + O2 = an aldehyde + FMN + sulfite + H2O + 2 H(+). Catalyzes the desulfonation of aliphatic sulfonates. The polypeptide is Alkanesulfonate monooxygenase (Escherichia coli O9:H4 (strain HS)).